A 182-amino-acid chain; its full sequence is Probable inosine/xanthosine triphosphatase (182 aa).

Positions 42 and 69 each coordinate Mg(2+).

This sequence belongs to the YjjX NTPase family. As to quaternary structure, homodimer. Mg(2+) serves as cofactor. It depends on Mn(2+) as a cofactor.

It carries out the reaction XTP + H2O = XDP + phosphate + H(+). The catalysed reaction is ITP + H2O = IDP + phosphate + H(+). Phosphatase that hydrolyzes non-canonical purine nucleotides such as XTP and ITP to their respective diphosphate derivatives. Probably excludes non-canonical purines from DNA/RNA precursor pool, thus preventing their incorporation into DNA/RNA and avoiding chromosomal lesions. In Methanothermobacter thermautotrophicus (strain ATCC 29096 / DSM 1053 / JCM 10044 / NBRC 100330 / Delta H) (Methanobacterium thermoautotrophicum), this protein is Probable inosine/xanthosine triphosphatase.